A 526-amino-acid polypeptide reads, in one-letter code: Dolichyl pyrophosphate Glc1Man9GlcNAc2 alpha-1,3-glucosyltransferase (526 aa).

A run of 11 helical transmembrane segments spans residues alanine 9–isoleucine 29, phenylalanine 108–isoleucine 128, phenylalanine 143–phenylalanine 163, glycine 188–alanine 208, valine 238–alanine 258, proline 334–phenylalanine 354, glycine 361–valine 380, alanine 400–phenylalanine 422, leucine 427–phenylalanine 449, threonine 461–threonine 481, and tyrosine 487–tryptophan 507.

Belongs to the ALG6/ALG8 glucosyltransferase family.

It localises to the endoplasmic reticulum membrane. The enzyme catalyses an alpha-D-Glc-(1-&gt;3)-alpha-D-Man-(1-&gt;2)-alpha-D-Man-(1-&gt;2)-alpha-D-Man-(1-&gt;3)-[alpha-D-Man-(1-&gt;2)-alpha-D-Man-(1-&gt;3)-[alpha-D-Man-(1-&gt;2)-alpha-D-Man-(1-&gt;6)]-alpha-D-Man-(1-&gt;6)]-beta-D-Man-(1-&gt;4)-beta-D-GlcNAc-(1-&gt;4)-alpha-D-GlcNAc-diphospho-di-trans,poly-cis-dolichol + a di-trans,poly-cis-dolichyl beta-D-glucosyl phosphate = an alpha-D-Glc-(1-&gt;3)-alpha-D-Glc-(1-&gt;3)-alpha-D-Man-(1-&gt;2)-alpha-D-Man-(1-&gt;2)-alpha-D-Man-(1-&gt;3)-[alpha-D-Man-(1-&gt;2)-alpha-D-Man-(1-&gt;3)-[alpha-D-Man-(1-&gt;2)-alpha-D-Man-(1-&gt;6)]-alpha-D-Man-(1-&gt;6)]-beta-D-Man-(1-&gt;4)-beta-D-GlcNAc-(1-&gt;4)-alpha-D-GlcNAc-diphospho-di-trans,poly-cis-dolichol + a di-trans,poly-cis-dolichyl phosphate + H(+). It functions in the pathway protein modification; protein glycosylation. Dolichyl pyrophosphate Glc1Man9GlcNAc2 alpha-1,3-glucosyltransferase that operates in the biosynthetic pathway of dolichol-linked oligosaccharides, the glycan precursors employed in protein asparagine (N)-glycosylation. The assembly of dolichol-linked oligosaccharides begins on the cytosolic side of the endoplasmic reticulum membrane and finishes in its lumen. The sequential addition of sugars to dolichol pyrophosphate produces dolichol-linked oligosaccharides containing fourteen sugars, including two GlcNAcs, nine mannoses and three glucoses. Once assembled, the oligosaccharide is transferred from the lipid to nascent proteins by oligosaccharyltransferases. In the lumen of the endoplasmic reticulum, adds the second glucose residue from dolichyl phosphate glucose (Dol-P-Glc) onto the lipid-linked oligosaccharide intermediate Glc(1)Man(9)GlcNAc(2)-PP-Dol to produce Glc(2)Man(9)GlcNAc(2)-PP-Dol. Glc(2)Man(9)GlcNAc(2)-PP-Dol is a substrate for ALG10, the following enzyme in the biosynthetic pathway. Required for PKD1/Polycystin-1 maturation and localization to the plasma membrane of the primary cilia. The chain is Dolichyl pyrophosphate Glc1Man9GlcNAc2 alpha-1,3-glucosyltransferase from Mus musculus (Mouse).